Consider the following 301-residue polypeptide: RNA polymerase II holoenzyme cyclin-like subunit (301 aa).

The Cyclin N-terminal domain maps to 53–142 (QQLIKLGKRM…LGECEFALIS (90 aa)).

This sequence belongs to the cyclin family. Cyclin C subfamily. In terms of assembly, component of the srb8-11 complex, a regulatory module of the Mediator complex.

It localises to the nucleus. In terms of biological role, component of the srb8-11 complex. The srb8-11 complex is a regulatory module of the Mediator complex which is itself involved in regulation of basal and activated RNA polymerase II-dependent transcription. The srb8-11 complex may be involved in the transcriptional repression of a subset of genes regulated by Mediator. It may inhibit the association of the Mediator complex with RNA polymerase II to form the holoenzyme complex. The srb8-11 complex phosphorylates the C-terminal domain (CTD) of the largest subunit of RNA polymerase II. The chain is RNA polymerase II holoenzyme cyclin-like subunit (ssn8) from Aspergillus oryzae (strain ATCC 42149 / RIB 40) (Yellow koji mold).